Consider the following 318-residue polypeptide: Transaldolase (318 aa).

K132 acts as the Schiff-base intermediate with substrate in catalysis.

The protein belongs to the transaldolase family. Type 1 subfamily. Homodimer.

The protein resides in the cytoplasm. The enzyme catalyses D-sedoheptulose 7-phosphate + D-glyceraldehyde 3-phosphate = D-erythrose 4-phosphate + beta-D-fructose 6-phosphate. The protein operates within carbohydrate degradation; pentose phosphate pathway; D-glyceraldehyde 3-phosphate and beta-D-fructose 6-phosphate from D-ribose 5-phosphate and D-xylulose 5-phosphate (non-oxidative stage): step 2/3. In terms of biological role, transaldolase is important for the balance of metabolites in the pentose-phosphate pathway. In Shewanella piezotolerans (strain WP3 / JCM 13877), this protein is Transaldolase.